We begin with the raw amino-acid sequence, 316 residues long: Transaldolase (316 aa).

Residue Lys132 is the Schiff-base intermediate with substrate of the active site.

Belongs to the transaldolase family. Type 1 subfamily. As to quaternary structure, homodimer.

It is found in the cytoplasm. It carries out the reaction D-sedoheptulose 7-phosphate + D-glyceraldehyde 3-phosphate = D-erythrose 4-phosphate + beta-D-fructose 6-phosphate. It participates in carbohydrate degradation; pentose phosphate pathway; D-glyceraldehyde 3-phosphate and beta-D-fructose 6-phosphate from D-ribose 5-phosphate and D-xylulose 5-phosphate (non-oxidative stage): step 2/3. Its function is as follows. Transaldolase is important for the balance of metabolites in the pentose-phosphate pathway. This is Transaldolase from Marinomonas sp. (strain MWYL1).